We begin with the raw amino-acid sequence, 127 residues long: Putative membrane protein insertion efficiency factor (127 aa).

Positions 71-106 (DPPPPPRLHRAAAARMPRQRDADPRDTTRCSSTGAE) are disordered. The segment covering 88–98 (RQRDADPRDTT) has biased composition (basic and acidic residues).

It belongs to the UPF0161 family.

It localises to the cell inner membrane. Functionally, could be involved in insertion of integral membrane proteins into the membrane. This chain is Putative membrane protein insertion efficiency factor, found in Sorangium cellulosum (strain So ce56) (Polyangium cellulosum (strain So ce56)).